Consider the following 398-residue polypeptide: Cysteine desulfurase 2 (398 aa).

Residues 71–72 (GT), asparagine 150, glutamine 178, and 198–200 (SGH) each bind pyridoxal 5'-phosphate. Lysine 201 is modified (N6-(pyridoxal phosphate)lysine). Threonine 236 lines the pyridoxal 5'-phosphate pocket. Catalysis depends on cysteine 323, which acts as the Cysteine persulfide intermediate. Residue cysteine 323 participates in [2Fe-2S] cluster binding.

This sequence belongs to the class-V pyridoxal-phosphate-dependent aminotransferase family. NifS/IscS subfamily. As to quaternary structure, homodimer. Requires pyridoxal 5'-phosphate as cofactor.

The enzyme catalyses (sulfur carrier)-H + L-cysteine = (sulfur carrier)-SH + L-alanine. In terms of biological role, catalyzes the removal of elemental sulfur atoms from cysteine to produce alanine. Seems to participate in the biosynthesis of the nitrogenase metalloclusters by providing the inorganic sulfur required for the Fe-S core formation. In Trichormus variabilis (strain ATCC 29413 / PCC 7937) (Anabaena variabilis), this protein is Cysteine desulfurase 2.